The sequence spans 1002 residues: Mannan endo-1,4-beta-mannosidase (1002 aa).

The first 28 residues, 1–28, serve as a signal peptide directing secretion; sequence MKTTVTKLLATVAAASTIFGMSTLPAFA. The GH26 domain occupies 49 to 396; sequence AETRALFDKL…ADSNKNLMAS (348 aa). His-144 provides a ligand contact to substrate. Glu-205 serves as the catalytic Proton donor. Substrate-binding residues include Trp-210 and Tyr-278. Catalysis depends on Glu-316, which acts as the Nucleophile. Lys-384 is a binding site for substrate. CBM11 domains follow at residues 523–703 and 717–897; these read VDNV…GKRD and AKAQ…NEQT. Disordered stretches follow at residues 702–722 and 888–969; these read RDAY…AQSV and PAEN…LSRT. Over residues 707–719 the composition is skewed to polar residues; it reads PNTNPTPGNTAKA. 2 stretches are compositionally biased toward basic and acidic residues: residues 897 to 913 and 952 to 966; these read TPKD…KEQE and PDTK…KDGL. The LPXTG sorting signal signature appears at 966–970; it reads LSRTG. Thr-969 is modified (pentaglycyl murein peptidoglycan amidated threonine). A propeptide spans 970–1002 (removed by sortase); it reads GSNIISAIAAVAVLLLGGCAVLIARKRKGGDIE.

This sequence belongs to the glycosyl hydrolase 26 family. In terms of assembly, homodimer.

It is found in the secreted. The protein localises to the cell wall. It carries out the reaction Random hydrolysis of (1-&gt;4)-beta-D-mannosidic linkages in mannans, galactomannans and glucomannans.. Functionally, beta-mannanase likely involved in the utilization of carbohydrates in the human gut. Catalyzes the hydrolysis of different beta-1,4-linked mannans, such as ivory nut mannan, konjac glucomannan, as well as carob and guar gum galactomannans, to a mixture of oligosaccharides. The dominant product from ivory nut mannan is found to be mannotriose; mannobiose and mannotetraose are produced to a lesser extent. Does not hydrolyze mannobiose, and hydrolyzes mannotriose at a significantly lower rate than the longer oligosaccharides. The sequence is that of Mannan endo-1,4-beta-mannosidase from Bifidobacterium adolescentis (strain ATCC 15703 / DSM 20083 / NCTC 11814 / E194a).